A 238-amino-acid chain; its full sequence is ATP synthase subunit a (238 aa).

Transmembrane regions (helical) follow at residues Leu18–Ala38, Tyr76–Phe96, Asn114–Val134, Ser166–Val186, and Val193–Ile213.

The protein belongs to the ATPase A chain family. In terms of assembly, F-type ATPases have 2 components, CF(1) - the catalytic core - and CF(0) - the membrane proton channel. CF(1) has five subunits: alpha(3), beta(3), gamma(1), delta(1), epsilon(1). CF(0) has three main subunits: a(1), b(2) and c(9-12). The alpha and beta chains form an alternating ring which encloses part of the gamma chain. CF(1) is attached to CF(0) by a central stalk formed by the gamma and epsilon chains, while a peripheral stalk is formed by the delta and b chains.

The protein localises to the cell membrane. Key component of the proton channel; it plays a direct role in the translocation of protons across the membrane. The sequence is that of ATP synthase subunit a from Streptococcus pyogenes serotype M1.